Reading from the N-terminus, the 250-residue chain is Snake venom serine protease pictobin (250 aa).

An N-terminal signal peptide occupies residues 1–11 (ANLLILQVSYA). A propeptide spanning residues 12 to 17 (QKSSEL) is cleaved from the precursor. Residues 18–241 (VIGGDECNIN…HLHWILSIIA (224 aa)) enclose the Peptidase S1 domain. Cystine bridges form between Cys-24–Cys-155, Cys-42–Cys-58, Cys-134–Cys-202, Cys-166–Cys-181, and Cys-192–Cys-217. The active-site Charge relay system is His-57. Asn-71 and Asn-95 each carry an N-linked (GlcNAc...) asparagine glycan. Residue Asp-102 is the Charge relay system of the active site. 2 N-linked (GlcNAc...) asparagine glycosylation sites follow: Asn-146 and Asn-162. The active-site Charge relay system is the Ser-196. Residue Asn-243 is glycosylated (N-linked (GlcNAc...) asparagine).

The protein belongs to the peptidase S1 family. Snake venom subfamily. Monomer. As to expression, expressed by the venom gland.

The protein resides in the secreted. Functionally, snake venom serine protease that may impair the hemostatic system of the prey. The protein is Snake venom serine protease pictobin of Bothrops pictus (Desert lancehead).